A 370-amino-acid polypeptide reads, in one-letter code: Protein rough sheath 2 (370 aa).

HTH myb-type domains follow at residues 1-53 (MKER…KNYL) and 54-108 (RPGI…EKQQ). DNA-binding regions (H-T-H motif) lie at residues 27–53 (WHLV…KNYL) and 81–104 (WKKI…EVFK). A disordered region spans residues 107–129 (QQRELRDSRRPPPEPSPDERGRY). Residues 276–340 (KRVEQQLEME…QVKEEKMAEQ (65 aa)) adopt a coiled-coil conformation.

As to quaternary structure, homodimer. Interacts with AS2, WRKY1, HIRA, a probable histone chaperone, and RIK, a predicted RNA binding protein. In terms of tissue distribution, expressed in lateral organ promordia.

It is found in the nucleus. Functionally, transcription factor required for normal cell differentiation. Interacts directly with asymmetric leaves 2 (AS2) to repress the knox homeobox genes. The protein is Protein rough sheath 2 (RS2) of Zea mays (Maize).